Reading from the N-terminus, the 487-residue chain is Malonate-semialdehyde dehydrogenase (487 aa).

Residues A150, F152, K176, E179, R180, S229, and T251 each coordinate NAD(+). C284 acts as the Nucleophile in catalysis. Position 382 (E382) interacts with NAD(+).

This sequence belongs to the aldehyde dehydrogenase family. IolA subfamily. Homotetramer.

The catalysed reaction is 3-oxopropanoate + NAD(+) + CoA + H2O = hydrogencarbonate + acetyl-CoA + NADH + H(+). It carries out the reaction 2-methyl-3-oxopropanoate + NAD(+) + CoA + H2O = propanoyl-CoA + hydrogencarbonate + NADH + H(+). Its pathway is polyol metabolism; myo-inositol degradation into acetyl-CoA; acetyl-CoA from myo-inositol: step 7/7. Functionally, catalyzes the oxidation of malonate semialdehyde (MSA) and methylmalonate semialdehyde (MMSA) into acetyl-CoA and propanoyl-CoA, respectively. Is involved in a myo-inositol catabolic pathway. Bicarbonate, and not CO2, is the end-product of the enzymatic reaction. This Bacillus subtilis (strain 168) protein is Malonate-semialdehyde dehydrogenase.